A 232-amino-acid polypeptide reads, in one-letter code: Probable phospholipid hydroperoxide glutathione peroxidase 6, mitochondrial (232 aa).

The transit peptide at 1-54 (MLRSSIRLLYIRRTSPLLRSLSSSSSSSSSKRFDSAKPLFNSHRIISLPISTTG) directs the protein to the mitochondrion. The active site involves Cys-105.

This sequence belongs to the glutathione peroxidase family. In terms of tissue distribution, expressed at a low but detectable level in leaves, stems, and flowers, but at a higher level in siliques and even higher in roots. Predominantly expressed in seeds.

Its subcellular location is the mitochondrion. It catalyses the reaction a hydroperoxy polyunsaturated fatty acid + 2 glutathione = a hydroxy polyunsaturated fatty acid + glutathione disulfide + H2O. Functionally, protects cells and enzymes from oxidative damage, by catalyzing the reduction of hydrogen peroxide, lipid peroxides and organic hydroperoxide, by glutathione. In Arabidopsis thaliana (Mouse-ear cress), this protein is Probable phospholipid hydroperoxide glutathione peroxidase 6, mitochondrial (GPX6).